Reading from the N-terminus, the 544-residue chain is U1 small nuclear ribonucleoprotein component PRP42 (544 aa).

5 HAT repeats span residues 7–39 (LIHD…YIVK), 51–83 (QLLK…LEYK), 85–118 (GNVS…FCNN), 121–156 (SHQK…QISS), and 163–195 (KYWN…DIMD). Residues 230-235 (KKKLKK) carry the Nuclear localization signal motif. 4 HAT repeats span residues 255–288 (FESK…YTIT), 290–322 (QTDS…WLIN), 366–397 (NLLE…FKTF), and 456–488 (VEKN…LIYF).

Component of the 18S U1 snRNP particle, a subcomplex of the spliceosome.

It localises to the nucleus. In terms of biological role, essential component of the U1 snRNP particle, which recognizes and binds the 5'-splice site of pre-mRNA. Together with other non-snRNP factors, U1 snRNP forms the spliceosomal commitment complex, that targets pre-mRNA to the splicing pathway. U1 snRNP is cotranscriptionally recruited to intron-containing genes. Required for U1 snRNP biogenesis. The protein is U1 small nuclear ribonucleoprotein component PRP42 (PRP42) of Saccharomyces cerevisiae (strain ATCC 204508 / S288c) (Baker's yeast).